A 467-amino-acid chain; its full sequence is Xanthan biosynthesis protein XanB (467 aa).

The protein belongs to the mannose-6-phosphate isomerase type 2 family.

The enzyme catalyses D-mannose 6-phosphate = D-fructose 6-phosphate. It carries out the reaction alpha-D-mannose 1-phosphate + GTP + H(+) = GDP-alpha-D-mannose + diphosphate. It participates in nucleotide-sugar biosynthesis; GDP-alpha-D-mannose biosynthesis; GDP-alpha-D-mannose from alpha-D-mannose 1-phosphate (GTP route): step 1/1. Its pathway is nucleotide-sugar biosynthesis; GDP-alpha-D-mannose biosynthesis; alpha-D-mannose 1-phosphate from D-fructose 6-phosphate: step 1/2. Its function is as follows. Involved in xanthan production. This chain is Xanthan biosynthesis protein XanB (xanB), found in Xanthomonas campestris pv. campestris (strain B100).